The sequence spans 1184 residues: uncharacterized protein (1184 aa).

Disordered stretches follow at residues 115–152 (ETSSQPSQEVYHPHAGKAAQSAHVMNSTESRPSSAHVS) and 397–426 (TYKPKSSVNGSVYRSKSVKSTTSHNKVPER). Polar residues-rich tracts occupy residues 137 to 152 (HVMNSTESRPSSAHVS) and 397 to 421 (TYKPKSSVNGSVYRSKSVKSTTSHN). The residue at position 686 (Ser686) is a Phosphoserine. 4 stretches are compositionally biased toward basic and acidic residues: residues 705-767 (LSER…ESAH), 783-792 (FEHETEPSHY), 849-863 (SHAHDNAVNEKRDLG), and 891-902 (YLHDEKTRDTLT). 2 disordered regions span residues 705–870 (LSER…FGDV) and 890–1017 (DYLH…SSPK). At Ser905 the chain carries Phosphoserine. Residues 920 to 932 (EDHPHASEAERAH) are compositionally biased toward basic and acidic residues. Residues 941-950 (SSESSPESQS) are compositionally biased toward low complexity. Over residues 999-1011 (PRERLDDNAKEIL) the composition is skewed to basic and acidic residues. Position 1018 is a phosphoserine (Ser1018). Disordered stretches follow at residues 1029-1107 (NRKD…IGTQ) and 1135-1154 (DVDNVVSGHSNVNGVSKSRP). Positions 1032–1045 (DKAAVKRMLEEDSS) are enriched in basic and acidic residues. The segment covering 1073 to 1107 (PAVNNSTKPVAVTSKNGHSRNGSHAAHSNNVIGTQ) has biased composition (polar residues). Over residues 1138–1150 (NVVSGHSNVNGVS) the composition is skewed to low complexity.

It localises to the cytoplasm. This is an uncharacterized protein from Schizosaccharomyces pombe (strain 972 / ATCC 24843) (Fission yeast).